Consider the following 114-residue polypeptide: Iron-sulfur cluster insertion protein ErpA (114 aa).

Residues C42, C106, and C108 each coordinate iron-sulfur cluster.

The protein belongs to the HesB/IscA family. Homodimer. Iron-sulfur cluster is required as a cofactor.

Required for insertion of 4Fe-4S clusters for at least IspG. This is Iron-sulfur cluster insertion protein ErpA from Cronobacter sakazakii (strain ATCC BAA-894) (Enterobacter sakazakii).